A 640-amino-acid chain; its full sequence is SUMO-activating enzyme subunit 2 (640 aa).

ATP is bound by residues 24–29 (GAGGIG), Asp48, 56–59 (NLNR), Lys72, 95–96 (SI), and 117–122 (DNRAAR). Cys158 and Cys161 together coordinate Zn(2+). Residue Lys164 forms a Glycyl lysine isopeptide (Lys-Gly) (interchain with G-Cter in SUMO1) linkage. Cys173 serves as the catalytic Glycyl thioester intermediate. Residue Lys190 forms a Glycyl lysine isopeptide (Lys-Gly) (interchain with G-Cter in SUMO) linkage. A disordered region spans residues 202–231 (ADQEVSPDRADPEAAWEPTEAEARARASNE). Ser207 is modified (phosphoserine). Over residues 222–231 (AEARARASNE) the composition is skewed to basic and acidic residues. Lys236 is covalently cross-linked (Glycyl lysine isopeptide (Lys-Gly) (interchain with G-Cter in SUMO1); alternate). Residues Lys236 and Lys257 each participate in a glycyl lysine isopeptide (Lys-Gly) (interchain with G-Cter in SUMO2); alternate cross-link. Glycyl lysine isopeptide (Lys-Gly) (interchain with G-Cter in SUMO); alternate cross-links involve residues Lys257 and Lys271. At Lys271 the chain carries N6-acetyllysine; alternate. Residue Lys275 forms a Glycyl lysine isopeptide (Lys-Gly) (interchain with G-Cter in SUMO) linkage. Residue Lys371 forms a Glycyl lysine isopeptide (Lys-Gly) (interchain with G-Cter in SUMO2) linkage. A Glycyl lysine isopeptide (Lys-Gly) (interchain with G-Cter in SUMO1); alternate cross-link involves residue Lys420. Residue Lys420 forms a Glycyl lysine isopeptide (Lys-Gly) (interchain with G-Cter in SUMO2); alternate linkage. Zn(2+) is bound by residues Cys441 and Cys444. A Phosphoserine modification is found at Ser507. Lys540 participates in a covalent cross-link: Glycyl lysine isopeptide (Lys-Gly) (interchain with G-Cter in SUMO2). A compositionally biased stretch (basic and acidic residues) spans 551-563 (PEKVGPKQAEDAA). Residues 551–640 (PEKVGPKQAE…EELDDVIALD (90 aa)) are disordered. The span at 565 to 582 (SITNGSDDGAQPSTSTAQ) shows a compositional bias: polar residues. Over residues 583–597 (EQDDVLIVDSDEEDS) the composition is skewed to acidic residues. Position 592 is a phosphoserine (Ser592). A compositionally biased stretch (basic and acidic residues) spans 606–630 (EERSRKRKLDEKENLSAKRSRIEQK). A Glycyl lysine isopeptide (Lys-Gly) (interchain with G-Cter in SUMO) cross-link involves residue Lys611. Residue Lys613 forms a Glycyl lysine isopeptide (Lys-Gly) (interchain with G-Cter in SUMO); alternate linkage. Position 613 is an N6-acetyllysine; alternate (Lys613). Glycyl lysine isopeptide (Lys-Gly) (interchain with G-Cter in SUMO) cross-links involve residues Lys617 and Lys623. A compositionally biased stretch (acidic residues) spans 631–640 (EELDDVIALD).

It belongs to the ubiquitin-activating E1 family. In terms of assembly, heterodimer of SAE1 and UBA2/SAE2. The heterodimer corresponds to the two domains that are encoded on a single polypeptide chain in ubiquitin-activating enzyme E1. Interacts with UBE2I. Post-translationally, sumoylated with SUMO1 and SUMO2/3 and by UBC9. Sumoylation at Lys-236 inhibits enzymatic activity. Sumoylation at the C-terminal lysine cluster plays an essential role in nuclear trafficking.

It is found in the cytoplasm. Its subcellular location is the nucleus. It participates in protein modification; protein sumoylation. Its function is as follows. The heterodimer acts as an E1 ligase for SUMO1, SUMO2, SUMO3, and probably SUMO4. It mediates ATP-dependent activation of SUMO proteins followed by formation of a thioester bond between a SUMO protein and a conserved active site cysteine residue on UBA2/SAE2. The polypeptide is SUMO-activating enzyme subunit 2 (UBA2) (Homo sapiens (Human)).